Consider the following 393-residue polypeptide: Serine/threonine-protein phosphatase 2A activator 1 (393 aa).

Residues 328–393 form a disordered region; that stretch reads EKEEESIEQA…TSFSRDRLRR (66 aa). Composition is skewed to polar residues over residues 335–356 and 365–386; these read EQAN…TSTS and SGNN…QTSF. Serine 341 carries the post-translational modification Phosphoserine.

Belongs to the PTPA-type PPIase family. As to quaternary structure, interacts with the phosphatase PP2A-like catalytic subunits PPG1, PPH3 and SIT4. Forms a ternary complex with SIT4-TAP42.

The protein resides in the cytoplasm. It localises to the nucleus. It catalyses the reaction [protein]-peptidylproline (omega=180) = [protein]-peptidylproline (omega=0). Its function is as follows. PPIases accelerate the folding of proteins. It catalyzes the cis-trans isomerization of proline imidic peptide bonds in oligopeptides. Acts as a regulatory subunit for TAP42-associated PP2A-like phosphatases modulating their activity or substrate specificity, probably by inducing a conformational change in the catalytic subunit, a direct target of the PPIase. Can reactivate inactive phosphatase PP2A-phosphatase methylesterase complexes (PP2Ai) in presence of ATP and Mg(2+) by dissociating the inactive form from the complex. Involved in the regulation of cell cycle progression, mitotic spindle formation, bud morphogenesis and DNA repair. The polypeptide is Serine/threonine-protein phosphatase 2A activator 1 (RRD1) (Saccharomyces cerevisiae (strain ATCC 204508 / S288c) (Baker's yeast)).